The chain runs to 234 residues: DNA repair protein RecO (234 aa).

Belongs to the RecO family.

In terms of biological role, involved in DNA repair and RecF pathway recombination. In Idiomarina loihiensis (strain ATCC BAA-735 / DSM 15497 / L2-TR), this protein is DNA repair protein RecO.